The following is a 289-amino-acid chain: NADPH-dependent 7-cyano-7-deazaguanine reductase (289 aa).

A substrate-binding site is contributed by 81–83 (IES). Position 83-84 (83-84 (SK)) interacts with NADPH. The active-site Thioimide intermediate is C196. D203 (proton donor) is an active-site residue. 235–236 (HE) lines the substrate pocket. An NADPH-binding site is contributed by 264–265 (RG).

The protein belongs to the GTP cyclohydrolase I family. QueF type 2 subfamily. As to quaternary structure, homodimer.

It localises to the cytoplasm. It carries out the reaction 7-aminomethyl-7-carbaguanine + 2 NADP(+) = 7-cyano-7-deazaguanine + 2 NADPH + 3 H(+). It functions in the pathway tRNA modification; tRNA-queuosine biosynthesis. Catalyzes the NADPH-dependent reduction of 7-cyano-7-deazaguanine (preQ0) to 7-aminomethyl-7-deazaguanine (preQ1). This Albidiferax ferrireducens (strain ATCC BAA-621 / DSM 15236 / T118) (Rhodoferax ferrireducens) protein is NADPH-dependent 7-cyano-7-deazaguanine reductase.